The sequence spans 286 residues: Quinone oxidoreductase 2 (286 aa).

NADP(+) is bound by residues Gly6–Leu11, Arg33, Ser73–Ser75, Gly138–Asn143, and Arg171.

This sequence belongs to the NmrA-type oxidoreductase family. As to quaternary structure, monomer.

The enzyme catalyses a quinone + NADH + H(+) = a quinol + NAD(+). It carries out the reaction a quinone + NADPH + H(+) = a quinol + NADP(+). Functionally, quinone oxidoreductase that may play some additional role beyond quinone reduction. Potential redox sensor protein. Overexpression induces retardation of growth. This is Quinone oxidoreductase 2 (qorB) from Escherichia coli (strain K12).